A 278-amino-acid polypeptide reads, in one-letter code: Acetyl-coenzyme A carboxylase carboxyl transferase subunit beta (278 aa).

The region spanning 23 to 278 (LWSKCDSCGA…QLIKLLGHMK (256 aa)) is the CoA carboxyltransferase N-terminal domain. Zn(2+) contacts are provided by C27, C30, C46, and C49. Residues 27-49 (CDSCGAALHKKQLEDHLYTCPHC) form a C4-type zinc finger.

This sequence belongs to the AccD/PCCB family. As to quaternary structure, acetyl-CoA carboxylase is a heterohexamer composed of biotin carboxyl carrier protein (AccB), biotin carboxylase (AccC) and two subunits each of ACCase subunit alpha (AccA) and ACCase subunit beta (AccD). Requires Zn(2+) as cofactor.

The protein localises to the cytoplasm. The catalysed reaction is N(6)-carboxybiotinyl-L-lysyl-[protein] + acetyl-CoA = N(6)-biotinyl-L-lysyl-[protein] + malonyl-CoA. The protein operates within lipid metabolism; malonyl-CoA biosynthesis; malonyl-CoA from acetyl-CoA: step 1/1. Functionally, component of the acetyl coenzyme A carboxylase (ACC) complex. Biotin carboxylase (BC) catalyzes the carboxylation of biotin on its carrier protein (BCCP) and then the CO(2) group is transferred by the transcarboxylase to acetyl-CoA to form malonyl-CoA. The chain is Acetyl-coenzyme A carboxylase carboxyl transferase subunit beta from Chlorobaculum tepidum (strain ATCC 49652 / DSM 12025 / NBRC 103806 / TLS) (Chlorobium tepidum).